Reading from the N-terminus, the 319-residue chain is Beta-ketoacyl-[acyl-carrier-protein] synthase III (319 aa).

Residues Cys113 and His246 contribute to the active site. The segment at 247 to 251 is ACP-binding; that stretch reads QANLR. Asn276 is an active-site residue.

This sequence belongs to the thiolase-like superfamily. FabH family. Homodimer.

The protein resides in the cytoplasm. The enzyme catalyses malonyl-[ACP] + acetyl-CoA + H(+) = 3-oxobutanoyl-[ACP] + CO2 + CoA. It participates in lipid metabolism; fatty acid biosynthesis. Functionally, catalyzes the condensation reaction of fatty acid synthesis by the addition to an acyl acceptor of two carbons from malonyl-ACP. Catalyzes the first condensation reaction which initiates fatty acid synthesis and may therefore play a role in governing the total rate of fatty acid production. Possesses both acetoacetyl-ACP synthase and acetyl transacylase activities. Its substrate specificity determines the biosynthesis of branched-chain and/or straight-chain of fatty acids. This is Beta-ketoacyl-[acyl-carrier-protein] synthase III from Chromobacterium violaceum (strain ATCC 12472 / DSM 30191 / JCM 1249 / CCUG 213 / NBRC 12614 / NCIMB 9131 / NCTC 9757 / MK).